Consider the following 353-residue polypeptide: NADH-quinone oxidoreductase subunit H (353 aa).

The next 9 helical transmembrane spans lie at Leu8–Trp28, Gly75–Ile95, Ile108–Gly128, Val148–Leu168, Val179–Glu199, Leu229–Phe249, Leu258–Val278, Phe297–Pro317, and Ile319–Phe339.

The protein belongs to the complex I subunit 1 family. In terms of assembly, NDH-1 is composed of 14 different subunits. Subunits NuoA, H, J, K, L, M, N constitute the membrane sector of the complex.

The protein localises to the cell membrane. It carries out the reaction a quinone + NADH + 5 H(+)(in) = a quinol + NAD(+) + 4 H(+)(out). NDH-1 shuttles electrons from NADH, via FMN and iron-sulfur (Fe-S) centers, to quinones in the respiratory chain. The immediate electron acceptor for the enzyme in this species is believed to be ubiquinone. Couples the redox reaction to proton translocation (for every two electrons transferred, four hydrogen ions are translocated across the cytoplasmic membrane), and thus conserves the redox energy in a proton gradient. This subunit may bind ubiquinone. The sequence is that of NADH-quinone oxidoreductase subunit H from Dehalococcoides mccartyi (strain CBDB1).